A 447-amino-acid chain; its full sequence is Selenide, water dikinase 3 (447 aa).

The active site involves Sec50. Position 50 (Sec50) is a non-standard amino acid, selenocysteine. ATP is bound by residues Lys53, 103-105 (GMD), Asp123, Asp146, and 197-200 (GGQT). Asp105 lines the Mg(2+) pocket. Asp146 is a Mg(2+) binding site. Residue Asp301 participates in Mg(2+) binding.

This sequence belongs to the selenophosphate synthase 1 family. In terms of assembly, homodimer. Mg(2+) serves as cofactor. As to expression, in the embryo, expressed in retina, olfactory vesicles, tectum, pronephros ducts and myotomes at 24 hours post-fertilization and in retina, tectum, liver and intestinal bulb 3 days after fertilization.

The catalysed reaction is hydrogenselenide + ATP + H2O = selenophosphate + AMP + phosphate + 2 H(+). Functionally, synthesizes selenophosphate from selenide and ATP. In Danio rerio (Zebrafish), this protein is Selenide, water dikinase 3.